A 944-amino-acid chain; its full sequence is Leucine--tRNA ligase (944 aa).

A 'HIGH' region motif is present at residues 40-51 (PYPSGAGLHVGH). Residues 718–722 (KMSKS) carry the 'KMSKS' region motif. An ATP-binding site is contributed by Lys-721.

The protein belongs to the class-I aminoacyl-tRNA synthetase family.

The protein localises to the cytoplasm. The enzyme catalyses tRNA(Leu) + L-leucine + ATP = L-leucyl-tRNA(Leu) + AMP + diphosphate. The chain is Leucine--tRNA ligase from Bacteroides thetaiotaomicron (strain ATCC 29148 / DSM 2079 / JCM 5827 / CCUG 10774 / NCTC 10582 / VPI-5482 / E50).